We begin with the raw amino-acid sequence, 344 residues long: Putative replication factor C small subunit L499 (344 aa).

Residue 57 to 64 (GPSGSGKT) coordinates ATP.

Belongs to the activator 1 small subunits family. RfcS subfamily.

In terms of biological role, part of the RFC clamp loader complex which loads the PCNA sliding clamp onto DNA. The sequence is that of Putative replication factor C small subunit L499 from Acanthamoeba polyphaga mimivirus (APMV).